Consider the following 337-residue polypeptide: Follistatin (337 aa).

A signal peptide spans 1-22 (PGGVCLLLLLLCQFMEDRSAQA). Residues 23 to 96 (GNCWLRQAKN…TCENVDCGPG (74 aa)) form the TB domain. 18 disulfide bridges follow: Cys-25/Cys-48, Cys-35/Cys-81, Cys-49/Cys-84, Cys-88/Cys-99, Cys-93/Cys-109, Cys-111/Cys-143, Cys-115/Cys-136, Cys-125/Cys-157, Cys-161/Cys-172, Cys-166/Cys-182, Cys-185/Cys-218, Cys-189/Cys-211, Cys-200/Cys-232, Cys-238/Cys-249, Cys-243/Cys-260, Cys-263/Cys-295, Cys-267/Cys-288, and Cys-277/Cys-309. The 24-residue stretch at 87–110 (TCENVDCGPGKKCRMNKKNKPRCV) folds into the Follistatin-like 1 domain. Residues 105-159 (NKPRCVCAPDCSNITWKGPVCGLDGKTYRNECALLKARCKEQPELEVQYQGKCKK) enclose the Kazal-like 1 domain. Asn-117 carries an N-linked (GlcNAc...) asparagine glycan. A Follistatin-like 2 domain is found at 160-183 (TCRDVFCPGSSTCVVDQTNNAYCV). A Kazal-like 2 domain is found at 179–234 (NAYCVTCNRICPEPTSSEQYLCGNDGVTYPSACHLRKATCLLGRSIGLAYEGKCIK). The Follistatin-like 3 domain maps to 237-261 (SCEDIQCTGGKKCLWDFKVGRGRCS). A Kazal-like 3 domain is found at 254 to 311 (KVGRGRCSLCGELCPESKSEEPVCASDNATYASECAMKEAACSSGVLLEVKHSGSCNS). The N-linked (GlcNAc...) asparagine glycan is linked to Asn-281. The segment at 309-337 (CNSISEDTEDEEEDEDQDYSFPISSILEW) is disordered. The segment covering 314–326 (EDTEDEEEDEDQD) has biased composition (acidic residues).

As to quaternary structure, monomer.

The protein localises to the secreted. Its function is as follows. Binds directly to activin and functions as an activin antagonist. Specific inhibitor of the biosynthesis and secretion of pituitary follicle stimulating hormone (FSH). This Ovis aries (Sheep) protein is Follistatin.